The primary structure comprises 78 residues: Calcium/calmodulin-dependent protein kinase II inhibitor 1 (78 aa).

A CAMK2 inhibitory domain region spans residues 41–68; it reads SKRPPKLGQIGRSKRVVIEDDRIDDVLK.

The protein belongs to the CAMK2N family. In terms of assembly, interacts with CAMK2B; the presence of Ca(2+)/calmodulin increases the interaction but is not essential. Interacts with CAMK2A; this interaction requires CAMK2A activation by Ca(2+). As to expression, expressed in the brain (at protein level). Expressed in cardiomyocytes but not cardiac fibroblasts (at protein level).

The protein resides in the synapse. Its subcellular location is the cell projection. The protein localises to the dendrite. It is found in the postsynaptic density. Its function is as follows. Potent and specific inhibitor of CaM-kinase II (CAMK2). Plays a role in the maintenance of long-term retrieval-induced memory in response to contextual fear. Modulates blood pressure and vascular reactivity via regulation of CAMK2 activity in addition to regulation of left ventricular mass. Mediates the NLRP3 inflammasome in cardiomyocytes via acting as an inhibitor of the MAPK14/p38 and MAPK8/JNK pathways, thereby regulating ventricular remodeling and cardiac rhythm post-myocardial infarction. Negatively effects insulin sensitivity and promotes lipid formation in adipose tissues independent of CAMK2 signaling. This chain is Calcium/calmodulin-dependent protein kinase II inhibitor 1 (Camk2n1), found in Mus musculus (Mouse).